We begin with the raw amino-acid sequence, 633 residues long: DEAD-box ATP-dependent RNA helicase 27 (633 aa).

Residues M1 to K17 show a composition bias toward basic and acidic residues. Residues M1–E147 form a disordered region. Residues A2 to Q34 are a coiled coil. Composition is skewed to acidic residues over residues M37 to D47 and D74 to E83. Over residues K88–Q97 the composition is skewed to basic residues. 2 stretches are compositionally biased toward acidic residues: residues N103 to E114 and S131 to E140. Residues K117–N153 adopt a coiled-coil conformation. The short motif at K154 to A182 is the Q motif element. The Helicase ATP-binding domain occupies I185 to I360. An ATP-binding site is contributed by A198–T205. The short motif at D308–D311 is the DEAD box element. In terms of domain architecture, Helicase C-terminal spans R386–L534. The disordered stretch occupies residues K608–Y633.

It belongs to the DEAD box helicase family. DDX18/HAS1 subfamily.

The catalysed reaction is ATP + H2O = ADP + phosphate + H(+). This is DEAD-box ATP-dependent RNA helicase 27 (RH27) from Arabidopsis thaliana (Mouse-ear cress).